We begin with the raw amino-acid sequence, 277 residues long: Histone-lysine N-methyltransferase set-17 (277 aa).

The 112-residue stretch at 135–246 folds into the SET domain; the sequence is FRIEESKLPN…INQELLVWYG (112 aa). Residue Tyr245 participates in S-adenosyl-L-methionine binding.

The protein belongs to the class V-like SAM-binding methyltransferase superfamily. In terms of tissue distribution, expressed in the germline. Predominantly expressed in primary spermatocytes. Also expressed in the oocyte-producing germline of hermaphrodites.

It localises to the nucleus. The enzyme catalyses N(6)-methyl-L-lysyl(4)-[histone H3] + S-adenosyl-L-methionine = N(6),N(6)-dimethyl-L-lysyl(4)-[histone H3] + S-adenosyl-L-homocysteine + H(+). The catalysed reaction is L-lysyl(4)-[histone H3] + S-adenosyl-L-methionine = N(6)-methyl-L-lysyl(4)-[histone H3] + S-adenosyl-L-homocysteine + H(+). Its function is as follows. Histone methyltransferase that specifically mono- and di-methylates 'Lys-4' of histone H3 in vitro. Does not tri-methylate 'Lys-4' of histone H3 in vitro. Promotes spermatid development and fertility by positively regulating the transcription of spermatocyte-specific genes in primary spermatocytes. Together with spr-5, required for transgenerational fertility. This is Histone-lysine N-methyltransferase set-17 from Caenorhabditis elegans.